The following is a 265-amino-acid chain: Mlc titration factor A (265 aa).

Zn(2+)-binding residues include His-111, His-148, His-152, and Glu-211.

This sequence belongs to the MtfA family. Interacts with Mlc. Requires Zn(2+) as cofactor.

The protein resides in the cytoplasm. Functionally, involved in the modulation of the activity of the glucose-phosphotransferase system (glucose-PTS). Interacts with the transcriptional repressor Mlc, preventing its interaction with DNA and leading to the modulation of expression of genes regulated by Mlc, including ptsG, which encodes the PTS system glucose-specific EIICB component. In terms of biological role, shows zinc-dependent metallopeptidase activity. The chain is Mlc titration factor A from Salmonella gallinarum (strain 287/91 / NCTC 13346).